We begin with the raw amino-acid sequence, 312 residues long: Malate dehydrogenase (312 aa).

NAD(+) contacts are provided by residues 7-13 (GAAGGIG) and D34. The substrate site is built by R81 and R87. NAD(+)-binding positions include N94 and 117 to 119 (ITN). Substrate-binding residues include N119 and R153. H177 (proton acceptor) is an active-site residue. Residue M227 participates in NAD(+) binding.

It belongs to the LDH/MDH superfamily. MDH type 1 family. In terms of assembly, homodimer.

The enzyme catalyses (S)-malate + NAD(+) = oxaloacetate + NADH + H(+). Catalyzes the reversible oxidation of malate to oxaloacetate. In Shigella dysenteriae serotype 1 (strain Sd197), this protein is Malate dehydrogenase.